We begin with the raw amino-acid sequence, 330 residues long: PDZ and LIM domain protein 4 (330 aa).

Positions 1 to 84 (MTHSVTLRGP…HLTLSVSRPE (84 aa)) constitute a PDZ domain. 2 disordered regions span residues 104–153 (DPES…SNEA) and 219–242 (EAGE…ASKL). 7 positions are modified to phosphoserine: Ser107, Ser111, Ser115, Ser118, Ser119, Ser124, and Ser134. The segment covering 108 to 122 (QDCSPATSRRSSVSG) has biased composition (polar residues). Residues 255 to 305 (CTRCGHGIVGTIVKARDKLYHPECFMCSDCGLNLKQRGYFFLDERLYCENH) form the LIM zinc-binding domain.

In terms of assembly, homodimer. Interacts (via C-terminus only or via combined C-terminus and LIM domain, but not LIM domain only) with PTPN13 (via the second or fourth PDZ domains). Found in a complex with PTPN13 and TRIP6. Interacts (via PDZ domain) with ACTN1 and ACTN2 (via C-terminal SDL residues). Interacts (via PDZ domain) with TRIP6 (via the second LIM domain or via the third LIM domain plus C-terminus). Interacts (via LIM domain) with GRIA1 (via C-terminus); this interaction as well as the interaction with alpha-actinin is required for their colocalization in early endosomes. Interacts with PDLIM1. Forms (via LIM domain) a heterodimer with PDLIM3. Interacts directly with SRC (via kinase domain and to a lesser extent the SH2 domain). In terms of processing, phosphorylated on tyrosine residue(s). Can be dephosphorylated by PTPN13. Expressed in several non-muscle tissues including lung, brain, ovary and uterus, and especially in epithelial cells at 14 dpc. In the uterus, high expression in the glandular epithelium, but absent in the simple columnar epithelium lining the uterus cavity.

Its subcellular location is the cytoplasm. It is found in the cytoskeleton. It localises to the cell projection. The protein resides in the dendritic spine. The protein localises to the early endosome membrane. Its subcellular location is the recycling endosome membrane. It is found in the nucleus. It localises to the perinuclear region. The protein resides in the lamellipodium. The protein localises to the synapse. Its subcellular location is the synaptosome. Functionally, suppresses SRC activation by recognizing and binding to active SRC and facilitating PTPN13-mediated dephosphorylation of SRC 'Tyr-419' leading to its inactivation. Inactivated SRC dissociates from this protein allowing the initiation of a new SRC inactivation cycle. Involved in reorganization of the actin cytoskeleton. In nonmuscle cells, binds to ACTN1 (alpha-actinin-1), increases the affinity of ACTN1 to F-actin (filamentous actin), and promotes formation of actin stress fibers. Involved in regulation of the synaptic AMPA receptor transport in dendritic spines of hippocampal pyramidal neurons directing the receptors toward an insertion at the postsynaptic membrane. Links endosomal surface-internalized GRIA1-containing AMPA receptors to the alpha-actinin/actin cytoskeleton. Increases AMPA receptor-mediated excitatory postsynaptic currents in neurons. This chain is PDZ and LIM domain protein 4 (Pdlim4), found in Mus musculus (Mouse).